A 456-amino-acid chain; its full sequence is Trigger factor (456 aa).

The 86-residue stretch at 192–277 (GDTVVIDFVG…IHEVKTKEVP (86 aa)) folds into the PPIase FKBP-type domain.

The protein belongs to the FKBP-type PPIase family. Tig subfamily.

It is found in the cytoplasm. It carries out the reaction [protein]-peptidylproline (omega=180) = [protein]-peptidylproline (omega=0). Involved in protein export. Acts as a chaperone by maintaining the newly synthesized protein in an open conformation. Functions as a peptidyl-prolyl cis-trans isomerase. In Streptococcus pyogenes serotype M2 (strain MGAS10270), this protein is Trigger factor.